The primary structure comprises 117 residues: Protein Turandot F (117 aa).

A signal peptide spans 1 to 22; it reads MKTVILFSFLLVLLGYLGAGHA.

This sequence belongs to the Turandot family.

Its subcellular location is the secreted. Functionally, a humoral factor that may play a role in stress tolerance. The protein is Protein Turandot F of Drosophila sechellia (Fruit fly).